The chain runs to 143 residues: MSIIKEFKEFAVKGNVMDLAVGVIIGGAFSKIVDSVVKDLIMPVIGVLTGGLDFSNKFVLLGTIPPTFKGNPDSFKDLQAAGVAAFGYGSFITVAINFVILAFIIFLMVKFINKLRKPEEAAPAATPEDIVLLREIRDSLKQR.

2 consecutive transmembrane segments (helical) span residues 10 to 30 (FAVKGNVMDLAVGVIIGGAFS) and 89 to 109 (GSFITVAINFVILAFIIFLMV).

The protein belongs to the MscL family. As to quaternary structure, homopentamer.

The protein resides in the cell inner membrane. In terms of biological role, channel that opens in response to stretch forces in the membrane lipid bilayer. May participate in the regulation of osmotic pressure changes within the cell. The sequence is that of Large-conductance mechanosensitive channel from Burkholderia ambifaria (strain ATCC BAA-244 / DSM 16087 / CCUG 44356 / LMG 19182 / AMMD) (Burkholderia cepacia (strain AMMD)).